The chain runs to 780 residues: Endonuclease MutS2 (780 aa).

Position 334 to 341 (G334 to T341) interacts with ATP. Positions I706 to I780 constitute a Smr domain.

The protein belongs to the DNA mismatch repair MutS family. MutS2 subfamily. In terms of assembly, homodimer. Binds to stalled ribosomes, contacting rRNA.

Endonuclease that is involved in the suppression of homologous recombination and thus may have a key role in the control of bacterial genetic diversity. Its function is as follows. Acts as a ribosome collision sensor, splitting the ribosome into its 2 subunits. Detects stalled/collided 70S ribosomes which it binds and splits by an ATP-hydrolysis driven conformational change. Acts upstream of the ribosome quality control system (RQC), a ribosome-associated complex that mediates the extraction of incompletely synthesized nascent chains from stalled ribosomes and their subsequent degradation. Probably generates substrates for RQC. In Borreliella burgdorferi (strain ATCC 35210 / DSM 4680 / CIP 102532 / B31) (Borrelia burgdorferi), this protein is Endonuclease MutS2.